The chain runs to 272 residues: SKA complex subunit 1 homolog (272 aa).

A coiled-coil region spans residues A48–K75.

The protein belongs to the SKA1 family.

This Arabidopsis thaliana (Mouse-ear cress) protein is SKA complex subunit 1 homolog.